The primary structure comprises 338 residues: Malate dehydrogenase, mitochondrial (338 aa).

The transit peptide at 1–24 (MLSALARPASAALRRSFSTSAQNN) directs the protein to the mitochondrion. Residues 31–37 (GASGGIG) and Asp57 contribute to the NAD(+) site. O-linked (GlcNAc) serine glycosylation is present at Ser33. Lys78 and Lys91 each carry N6-acetyllysine; alternate. An N6-succinyllysine; alternate mark is found at Lys78 and Lys91. Residues Arg104 and Arg110 each coordinate substrate. NAD(+) contacts are provided by residues Asn117 and 140–142 (IAN). Residue Asn142 coordinates substrate. Lys165 bears the N6-acetyllysine mark. Position 176 (Arg176) interacts with substrate. Lys185 carries the N6-acetyllysine; alternate modification. Lys185 is subject to N6-succinyllysine; alternate. His200 (proton acceptor) is an active-site residue. Lys203 carries the N6-succinyllysine modification. 2 positions are modified to N6-acetyllysine; alternate: Lys215 and Lys239. N6-succinyllysine; alternate is present on residues Lys215 and Lys239. Lys239 is modified (N6-malonyllysine; alternate). Residue Ser246 is modified to Phosphoserine. Met251 serves as a coordination point for NAD(+). At Lys269 the chain carries N6-succinyllysine. N6-acetyllysine; alternate occurs at positions 296, 301, 307, 314, and 324. Lys296, Lys301, Lys307, Lys314, and Lys324 each carry N6-succinyllysine; alternate. At Lys307 the chain carries N6-malonyllysine; alternate. Ser326 is modified (phosphoserine). Residues Lys328, Lys329, and Lys335 each carry the N6-acetyllysine; alternate modification. Lys328 carries the N6-succinyllysine; alternate modification. Lys329 bears the N6-malonyllysine; alternate mark. Position 335 is an N6-succinyllysine; alternate (Lys335).

This sequence belongs to the LDH/MDH superfamily. MDH type 1 family. As to quaternary structure, homodimer. In terms of processing, acetylation is enhanced by up to 67% after treatment either with trichostin A (TSA) or with nicotinamide (NAM) with the appearance of tri- and tetraacetylations. Glucose also increases acetylation by about 60%.

The protein localises to the mitochondrion matrix. The catalysed reaction is (S)-malate + NAD(+) = oxaloacetate + NADH + H(+). Its activity is regulated as follows. Enzyme activity is enhanced by acetylation. This is Malate dehydrogenase, mitochondrial (MDH2) from Homo sapiens (Human).